We begin with the raw amino-acid sequence, 119 residues long: Large ribosomal subunit protein uL22 (119 aa).

The protein belongs to the universal ribosomal protein uL22 family. As to quaternary structure, part of the 50S ribosomal subunit.

In terms of biological role, this protein binds specifically to 23S rRNA; its binding is stimulated by other ribosomal proteins, e.g. L4, L17, and L20. It is important during the early stages of 50S assembly. It makes multiple contacts with different domains of the 23S rRNA in the assembled 50S subunit and ribosome. Functionally, the globular domain of the protein is located near the polypeptide exit tunnel on the outside of the subunit, while an extended beta-hairpin is found that lines the wall of the exit tunnel in the center of the 70S ribosome. The protein is Large ribosomal subunit protein uL22 of Rickettsia rickettsii (strain Iowa).